Here is a 99-residue protein sequence, read N- to C-terminus: Mu-hexatoxin-Mg1c (99 aa).

Cystine bridges form between cysteine 61–cysteine 75, cysteine 68–cysteine 80, and cysteine 74–cysteine 94.

Belongs to the neurotoxin 14 (magi-1) family. 09 (magi-1) subfamily. As to expression, expressed by the venom gland.

Its subcellular location is the secreted. Functionally, inhibits voltage-gated sodium channels by binding to site 3. Insecticidal neurotoxin. The polypeptide is Mu-hexatoxin-Mg1c (Macrothele gigas (Japanese funnel web spider)).